A 506-amino-acid polypeptide reads, in one-letter code: Anaerobic nitric oxide reductase transcription regulator NorR (506 aa).

Aspartate 57 is modified (4-aspartylphosphate). The Sigma-54 factor interaction domain maps to 187-416; that stretch reads MIGLSPNMMQ…LEHAIHRAVV (230 aa). ATP contacts are provided by residues 215–222 and 278–287; these read GETGTGKE and ADNGTLFLDE. Positions 481 to 500 form a DNA-binding region, H-T-H motif; that stretch reads WAACARALETDVANLHRLAK.

The protein operates within nitrogen metabolism; nitric oxide reduction. In terms of biological role, required for the expression of anaerobic nitric oxide (NO) reductase, acts as a transcriptional activator for at least the norVW operon. Activation also requires sigma-54. In Citrobacter koseri (strain ATCC BAA-895 / CDC 4225-83 / SGSC4696), this protein is Anaerobic nitric oxide reductase transcription regulator NorR.